A 704-amino-acid polypeptide reads, in one-letter code: Acetyl-coenzyme A synthetase 1 (704 aa).

CoA is bound by residues 239 to 242 (RGGK) and T358. ATP is bound by residues 434–436 (GEP), 458–463 (DTYWQT), D550, and R565. Position 573 (S573) interacts with CoA. An ATP-binding site is contributed by R576. R641 contributes to the CoA binding site. Positions 702 to 704 (VKL) match the Microbody targeting signal motif.

The protein belongs to the ATP-dependent AMP-binding enzyme family.

The protein resides in the microsome. The protein localises to the endoplasmic reticulum. It carries out the reaction acetate + ATP + CoA = acetyl-CoA + AMP + diphosphate. The protein is Acetyl-coenzyme A synthetase 1 (ACS1) of Candida glabrata (strain ATCC 2001 / BCRC 20586 / JCM 3761 / NBRC 0622 / NRRL Y-65 / CBS 138) (Yeast).